The primary structure comprises 956 residues: Endogenous retrovirus group K member 6 Pol protein (956 aa).

Positions 57–245 constitute a Reverse transcriptase domain; that stretch reads LEKGHIEPSF…TPFHYLGMQI (189 aa). Positions 161–164 match the LPQG motif; it reads LPQG. The YXDD motif lies at 195 to 198; it reads CIDD. Positions 460 to 590 constitute an RNase H type-1 domain; the sequence is LENALTVFTD…ADLLVSSALI (131 aa). Residues Asp-469, Glu-497, Asp-517, and Asp-582 each coordinate Mg(2+). The Integrase-type zinc finger occupies 587–628; sequence SALIKAQELHALTHVNAAGLKNKFDVTWKQAKDIVQHCTQCQ. The Zn(2+) site is built by His-596, His-600, Cys-624, and Cys-627. In terms of domain architecture, Integrase catalytic spans 642–803; it reads RGLCPNALWQ…TSAEQHLTGK (162 aa). Residues 811-859 constitute a DNA-binding region (integrase-type); sequence KLIWWKDNKNKTWEIGKVITWGRGFACVSPGENQLPVWIPTRHLKFYNE. The disordered stretch occupies residues 865 to 890; it reads KKSTSAETETSQSSTVDSQDEQNGDV. The segment covering 869-879 has biased composition (low complexity); the sequence is SAETETSQSST.

The protein belongs to the beta type-B retroviral polymerase family. HERV class-II K(HML-2) pol subfamily. Cleavage sites that yield the mature proteins remain to be determined.

The enzyme catalyses DNA(n) + a 2'-deoxyribonucleoside 5'-triphosphate = DNA(n+1) + diphosphate. It carries out the reaction Endonucleolytic cleavage to 5'-phosphomonoester.. Functionally, early post-infection, the reverse transcriptase converts the viral RNA genome into double-stranded viral DNA. The RNase H domain of the reverse transcriptase performs two functions. It degrades the RNA template and specifically removes the RNA primer from the RNA/DNA hybrid. Following nuclear import, the integrase catalyzes the insertion of the linear, double-stranded viral DNA into the host cell chromosome. Endogenous Pol proteins may have kept, lost or modified their original function during evolution. This Homo sapiens (Human) protein is Endogenous retrovirus group K member 6 Pol protein (ERVK-6).